The sequence spans 160 residues: Fluoride-specific ion channel FluC (160 aa).

A run of 4 helical transmembrane segments spans residues 5-25 (LFIS…GLLF), 34-54 (FGTL…LGLF), 67-87 (FLIT…SEVV), and 99-119 (FCVL…GIWI). Na(+)-binding residues include glycine 74 and threonine 77.

It belongs to the fluoride channel Fluc/FEX (TC 1.A.43) family.

Its subcellular location is the cell inner membrane. It catalyses the reaction fluoride(in) = fluoride(out). With respect to regulation, na(+) is not transported, but it plays an essential structural role and its presence is essential for fluoride channel function. Its function is as follows. Fluoride-specific ion channel. Important for reducing fluoride concentration in the cell, thus reducing its toxicity. This Haemophilus influenzae (strain ATCC 51907 / DSM 11121 / KW20 / Rd) protein is Fluoride-specific ion channel FluC.